Consider the following 37-residue polypeptide: Potassium channel toxin alpha-KTx 1.11 (37 aa).

Intrachain disulfides connect Cys-7–Cys-28, Cys-13–Cys-33, and Cys-17–Cys-35.

Belongs to the short scorpion toxin superfamily. Potassium channel inhibitor family. Alpha-KTx 01 subfamily. In terms of tissue distribution, expressed by the venom gland.

The protein resides in the secreted. Reversibly blocks the high conductance calcium-activated potassium channels composed of only alpha subunits (KCa1.1/KCNMA1). Unreversibly blocks the high conductance calcium-activated potassium channels composed of alpha and beta1 subunits (KCNMA1 and KCNMB1). Unreversibly and weakly blocks the high conductance calcium-activated potassium channels composed of alpha and beta4 (KCNMA1 and KCNMB4). In Centruroides noxius (Mexican scorpion), this protein is Potassium channel toxin alpha-KTx 1.11.